Reading from the N-terminus, the 408-residue chain is Probable pectate lyase 5 (408 aa).

Residues 1–27 (MRMTLVHLSLSLFSCLLLVLSPTFIAS) form the signal peptide. N-linked (GlcNAc...) asparagine glycosylation is present at Asn45. 3 residues coordinate Ca(2+): Asp206, Asp230, and Asp234. The active site involves Arg286.

Belongs to the polysaccharide lyase 1 family. Ca(2+) is required as a cofactor.

It carries out the reaction Eliminative cleavage of (1-&gt;4)-alpha-D-galacturonan to give oligosaccharides with 4-deoxy-alpha-D-galact-4-enuronosyl groups at their non-reducing ends.. It functions in the pathway glycan metabolism; pectin degradation; 2-dehydro-3-deoxy-D-gluconate from pectin: step 2/5. The sequence is that of Probable pectate lyase 5 from Arabidopsis thaliana (Mouse-ear cress).